A 349-amino-acid chain; its full sequence is Dihydroorotate dehydrogenase (quinone) (349 aa).

FMN-binding positions include 67–71 (AGLDK) and T91. K71 contributes to the substrate binding site. Position 116–120 (116–120 (NRLGF)) interacts with substrate. FMN contacts are provided by N147 and N180. N180 lines the substrate pocket. The active-site Nucleophile is S183. Substrate is bound at residue N185. The FMN site is built by K225 and T253. 254–255 (NT) is a binding site for substrate. Residues G276, G305, and 326 to 327 (YT) each bind FMN.

It belongs to the dihydroorotate dehydrogenase family. Type 2 subfamily. Monomer. Requires FMN as cofactor.

It localises to the cell membrane. It catalyses the reaction (S)-dihydroorotate + a quinone = orotate + a quinol. It participates in pyrimidine metabolism; UMP biosynthesis via de novo pathway; orotate from (S)-dihydroorotate (quinone route): step 1/1. In terms of biological role, catalyzes the conversion of dihydroorotate to orotate with quinone as electron acceptor. The polypeptide is Dihydroorotate dehydrogenase (quinone) (Bordetella avium (strain 197N)).